The primary structure comprises 787 residues: ATP-dependent zinc metalloprotease FtsH (787 aa).

At 1-5 (MNRKN) the chain is on the cytoplasmic side. A helical transmembrane segment spans residues 6-26 (VIRMVTAIAVVVLLGWSFFYF). Over 27-110 (SDDTRGYKFV…KVTTAVNEGS (84 aa)) the chain is Extracellular. The helical transmembrane segment at 111-131 (ILGELLVYVLPLLLLVGLFVM) threads the bilayer. Residues 132–787 (FSRMQGGARM…VSPSNPPAHG (656 aa)) are Cytoplasmic-facing. Residue 203–210 (GPPGTGKT) coordinates ATP. Position 425 (His425) interacts with Zn(2+). Glu426 is a catalytic residue. The Zn(2+) site is built by His429 and Asp501. The disordered stretch occupies residues 616 to 787 (DFGGRIPSDK…VSPSNPPAHG (172 aa)). 2 stretches are compositionally biased toward low complexity: residues 650–671 (AFKAAIARASQAAEASHQAAQS) and 700–709 (YGAPPGWHAP). Residues 710-720 (GWPPQQPPDYW) show a composition bias toward pro residues. Residues 721–732 (YPPEQQPSQSPY) show a composition bias toward low complexity. Over residues 733–762 (WPQPAPSYPGQAPPPYPSYPPCPSYPPPGQ) the composition is skewed to pro residues.

It in the central section; belongs to the AAA ATPase family. The protein in the C-terminal section; belongs to the peptidase M41 family. In terms of assembly, homohexamer. It depends on Zn(2+) as a cofactor.

The protein resides in the cell membrane. Functionally, acts as a processive, ATP-dependent zinc metallopeptidase for both cytoplasmic and membrane proteins. Plays a role in the quality control of integral membrane proteins. The polypeptide is ATP-dependent zinc metalloprotease FtsH (Mycobacterium leprae (strain TN)).